The primary structure comprises 273 residues: Nitrogenase iron protein 2 (273 aa).

Residue 8–15 coordinates ATP; sequence GKGGIGKS. Cys-95 lines the [4Fe-4S] cluster pocket. The residue at position 98 (Arg-98) is an ADP-ribosylarginine; by dinitrogenase reductase ADP-ribosyltransferase. Cys-130 is a binding site for [4Fe-4S] cluster.

This sequence belongs to the NifH/BchL/ChlL family. Homodimer. [4Fe-4S] cluster is required as a cofactor. Post-translationally, the reversible ADP-ribosylation of Arg-98 inactivates the nitrogenase reductase and regulates nitrogenase activity.

It carries out the reaction N2 + 8 reduced [2Fe-2S]-[ferredoxin] + 16 ATP + 16 H2O = H2 + 8 oxidized [2Fe-2S]-[ferredoxin] + 2 NH4(+) + 16 ADP + 16 phosphate + 6 H(+). Its function is as follows. The key enzymatic reactions in nitrogen fixation are catalyzed by the nitrogenase complex, which has 2 components: the iron protein and the molybdenum-iron protein. In Methanosarcina barkeri, this protein is Nitrogenase iron protein 2 (nifH2).